Here is a 337-residue protein sequence, read N- to C-terminus: uncharacterized protein (337 aa).

Residues 22-76 enclose the F-box domain; that stretch reads PFRLLSLPTLALKNVLLHIDFIDLLELSLASKKCEIYMKTCCLKIDSLHFHFRRI.

This is an uncharacterized protein from Caenorhabditis elegans.